The sequence spans 376 residues: 12-oxophytodienoate reductase 1 (376 aa).

FMN is bound by residues 35 to 37 (PLT), Ala68, and Gln110. Substrate-binding positions include Ser143 and 187–190 (HGAH). The active-site Proton donor is the Tyr192. Position 239 (Arg239) interacts with FMN. Residue Arg279 participates in substrate binding. Residues Gly309 and 330 to 331 (GR) contribute to the FMN site.

This sequence belongs to the NADH:flavin oxidoreductase/NADH oxidase family. The cofactor is FMN. Constitutively expressed in roots, leaves, cotyledons, cells culture and to a lower extent in flowers.

The protein resides in the cytoplasm. It carries out the reaction (1S,2S)-OPC-8 + NADP(+) = (9S,13S,15Z)-12-oxophyto-10,15-dienoate + NADPH + H(+). It functions in the pathway lipid metabolism; oxylipin biosynthesis. In terms of biological role, specifically cleaves olefinic bonds in alpha,beta-unsaturated carbonyls and may be involved in detoxification or modification of these reactive compounds. May be involved in the biosynthesis or metabolism of oxylipin signaling molecules. In vitro, reduces 9R,13R-12-oxophyodienoic acid (9R,13R-OPDA) to 9R,13R-OPC-8:0, but not 9S,13S-OPDA, the natural precursor of jasmonic acid. Also reduces N-ethylmaleimide and maleic acid. The sequence is that of 12-oxophytodienoate reductase 1 (OPR1) from Solanum lycopersicum (Tomato).